We begin with the raw amino-acid sequence, 106 residues long: Large ribosomal subunit protein uL24 (106 aa).

Belongs to the universal ribosomal protein uL24 family. As to quaternary structure, part of the 50S ribosomal subunit.

In terms of biological role, one of two assembly initiator proteins, it binds directly to the 5'-end of the 23S rRNA, where it nucleates assembly of the 50S subunit. Its function is as follows. One of the proteins that surrounds the polypeptide exit tunnel on the outside of the subunit. This chain is Large ribosomal subunit protein uL24, found in Azobacteroides pseudotrichonymphae genomovar. CFP2.